The sequence spans 155 residues: Putative pre-16S rRNA nuclease (155 aa).

Belongs to the YqgF nuclease family.

It is found in the cytoplasm. Its function is as follows. Could be a nuclease involved in processing of the 5'-end of pre-16S rRNA. In Novosphingobium aromaticivorans (strain ATCC 700278 / DSM 12444 / CCUG 56034 / CIP 105152 / NBRC 16084 / F199), this protein is Putative pre-16S rRNA nuclease.